The chain runs to 227 residues: Chaperone protein FocC (227 aa).

The signal sequence occupies residues 1–21; it reads MRIWAVLASFLVFFYIPQSYA.

Belongs to the periplasmic pilus chaperone family.

The protein resides in the periplasm. Functionally, involved in the biogenesis of the F1C fimbriae. This is Chaperone protein FocC (focC) from Escherichia coli O6:H1 (strain CFT073 / ATCC 700928 / UPEC).